Reading from the N-terminus, the 390-residue chain is E3 ubiquitin-protein ligase At4g11680 (390 aa).

Residues 1-19 (MSSSSSTTTNTTTESDSSS) are compositionally biased toward low complexity. Residues 1–39 (MSSSSSTTTNTTTESDSSSLPTHIGRSNSDGIIDTTPFL) are disordered. Helical transmembrane passes span 109 to 129 (VVFL…AVLI), 142 to 162 (VWVV…CVEY), 212 to 232 (MFSF…GQTL), 244 to 264 (IIFL…ACVI), and 265 to 285 (GLAV…VADQ). The RING-type; atypical zinc finger occupies 338-379 (CCICLCEYEDGVELRELPCNHHFHCTCIDKWLHINSRCPLCK).

Its subcellular location is the membrane. The catalysed reaction is S-ubiquitinyl-[E2 ubiquitin-conjugating enzyme]-L-cysteine + [acceptor protein]-L-lysine = [E2 ubiquitin-conjugating enzyme]-L-cysteine + N(6)-ubiquitinyl-[acceptor protein]-L-lysine.. It participates in protein modification; protein ubiquitination. Functionally, mediates E2-dependent protein ubiquitination in vitro. The sequence is that of E3 ubiquitin-protein ligase At4g11680 from Arabidopsis thaliana (Mouse-ear cress).